Consider the following 320-residue polypeptide: Protein TsetseEP (320 aa).

A signal peptide spans 1–19; it reads MKFFISFAFLCLVLSCVAA. The disordered stretch occupies residues 192-320; that stretch reads GLPEPEPEPE…ESKPNSLFNF (129 aa). Residues 194–308 are compositionally biased toward acidic residues; it reads PEPEPEPEPE…EPEPEPEPQP (115 aa). The segment at 194-311 is 59 X 2 AA tandem repeats of P-E; sequence PEPEPEPEPE…PEPEPQPEPE (118 aa).

In terms of tissue distribution, expressed in the gut, but not salivary glands, of female and male flies (at protein level). Present in vesicles in midgut cells and in the lumen of the gut.

Its subcellular location is the secreted. This chain is Protein TsetseEP, found in Glossina morsitans morsitans (Savannah tsetse fly).